The chain runs to 687 residues: POZ-, AT hook-, and zinc finger-containing protein 1 (687 aa).

Residues 41–130 enclose the BTB domain; that stretch reads CDVLLRVGDE…AYTSRIVVRL (90 aa). Residue Lys-112 forms a Glycyl lysine isopeptide (Lys-Gly) (interchain with G-Cter in SUMO2) linkage. Low complexity predominate over residues 250–260; the sequence is PFPSVASSAPP. The interval 250-278 is disordered; that stretch reads PFPSVASSAPPLTGKRGRGRPRKANLLDS. The segment at residues 264–276 is a DNA-binding region (a.T hook); the sequence is KRGRGRPRKANLL. Residue Lys-272 forms a Glycyl lysine isopeptide (Lys-Gly) (interchain with G-Cter in SUMO2) linkage. Phosphoserine is present on Ser-282. The segment at 292–314 adopts a C2H2-type 1 zinc-finger fold; sequence LPCGLCGKVFTDANRLRQHEAQH. Residues 332-351 form a disordered region; that stretch reads GENGLPISEDPDGPRKRSRT. 5 consecutive C2H2-type zinc fingers follow at residues 355-377, 383-405, 413-436, 442-464, and 495-518; these read VACEICGKIFRDVYHLNRHKLSH, YSCPVCGLRFKRKDRMSYHVRSH, YICQSCGKGFSRPDHLNGHIKQVH, HKCQTCNASFATRDRLRSHLACH, and NFCSICNRGFSSASYLKVHVKTHH. A compositionally biased stretch (basic and acidic residues) spans 549–558; sequence EGQKCSHQDP. The tract at residues 549–603 is disordered; it reads EGQKCSHQDPIESSDSYGDLSDASDLKTPEKQSANGSFSCDMAVPKNKMESDGEK. The C2H2-type 7 zinc finger occupies 605–628; sequence YPCPECGSFFRSKSYLNKHIQKVH.

This sequence belongs to the krueppel C2H2-type zinc-finger protein family. As to quaternary structure, homodimer. Interacts with RNF4. Interacts (via C-terminus) with TP53; this interaction inhibits TP53 ability to activate transcription. In terms of tissue distribution, ubiquitous.

The protein localises to the nucleus. Transcriptional regulator that plays a role in many biological processes such as embryogenesis, senescence, T-cell development or neurogenesis. Interacts with the TP53 protein to control genes that are important in proliferation and in the DNA-damage response. Mechanistically, the interaction inhibits the DNA binding and transcriptional activity of TP53/p53. Part of the transcriptional network modulating regulatory T-cell development and controls the generation of the regulatory T-cell pool under homeostatic conditions. Functionally, (Microbial infection) Plays a positive role in viral cDNA synthesis. This Homo sapiens (Human) protein is POZ-, AT hook-, and zinc finger-containing protein 1 (PATZ1).